Reading from the N-terminus, the 320-residue chain is Endolytic peptidoglycan transglycosylase RlpA (320 aa).

Belongs to the RlpA family.

Functionally, lytic transglycosylase with a strong preference for naked glycan strands that lack stem peptides. In Rickettsia typhi (strain ATCC VR-144 / Wilmington), this protein is Endolytic peptidoglycan transglycosylase RlpA.